Consider the following 531-residue polypeptide: Glucose-6-phosphate exchanger SLC37A1 (531 aa).

A helical transmembrane segment spans residues 18 to 38; the sequence is QWYRAFIFMLTFLLYASFHLS. Residues 53–72 form a disordered region; it reads CTAGDGPESPFSDPSSSTRH. The next 11 membrane-spanning stretches (helical) occupy residues 100 to 120, 129 to 149, 157 to 177, 192 to 214, 222 to 242, 332 to 352, 364 to 384, 392 to 412, 419 to 439, 464 to 484, and 488 to 508; these read GALD…SGII, YLTF…LGYF, FYVV…PSVV, IMGI…AGYW, SFIV…LFLI, LCLL…PLYI, GELS…AGVI, ASTC…FSSV, ATIA…ALIT, AIID…AGLI, and GWSN…LFLV.

This sequence belongs to the major facilitator superfamily. Organophosphate:Pi antiporter (OPA) (TC 2.A.1.4) family.

The protein resides in the endoplasmic reticulum membrane. It catalyses the reaction D-glucose 6-phosphate(in) + phosphate(out) = D-glucose 6-phosphate(out) + phosphate(in). Its activity is regulated as follows. Inhibited by vanadate but not by chlorogenic acid. Functionally, inorganic phosphate and glucose-6-phosphate antiporter. May transport cytoplasmic glucose-6-phosphate into the lumen of the endoplasmic reticulum and translocate inorganic phosphate into the opposite direction. Independent of a lumenal glucose-6-phosphatase. May not play a role in homeostatic regulation of blood glucose levels. In Mus musculus (Mouse), this protein is Glucose-6-phosphate exchanger SLC37A1.